The following is a 665-amino-acid chain: tRNA 5-methylaminomethyl-2-thiouridine biosynthesis bifunctional protein MnmC (665 aa).

Positions 1 to 243 (MSQTSLHHAR…KREMLAGERA (243 aa)) are tRNA (mnm(5)s(2)U34)-methyltransferase. The tract at residues 268–665 (IGGGIASAMT…RKLLKGKPLQ (398 aa)) is FAD-dependent cmnm(5)s(2)U34 oxidoreductase.

In the N-terminal section; belongs to the methyltransferase superfamily. tRNA (mnm(5)s(2)U34)-methyltransferase family. This sequence in the C-terminal section; belongs to the DAO family. Requires FAD as cofactor.

It is found in the cytoplasm. The enzyme catalyses 5-aminomethyl-2-thiouridine(34) in tRNA + S-adenosyl-L-methionine = 5-methylaminomethyl-2-thiouridine(34) in tRNA + S-adenosyl-L-homocysteine + H(+). Catalyzes the last two steps in the biosynthesis of 5-methylaminomethyl-2-thiouridine (mnm(5)s(2)U) at the wobble position (U34) in tRNA. Catalyzes the FAD-dependent demodification of cmnm(5)s(2)U34 to nm(5)s(2)U34, followed by the transfer of a methyl group from S-adenosyl-L-methionine to nm(5)s(2)U34, to form mnm(5)s(2)U34. The protein is tRNA 5-methylaminomethyl-2-thiouridine biosynthesis bifunctional protein MnmC of Aeromonas hydrophila subsp. hydrophila (strain ATCC 7966 / DSM 30187 / BCRC 13018 / CCUG 14551 / JCM 1027 / KCTC 2358 / NCIMB 9240 / NCTC 8049).